A 199-amino-acid chain; its full sequence is Adenylate kinase (199 aa).

8-13 is an ATP binding site; the sequence is GAGKGT. The NMP stretch occupies residues 28 to 57; sequence STGDIFRANIKNKTELGQQVKAIVDAGDYV. AMP-binding positions include Thr29, Arg34, 55-57, 83-86, and Gln90; these read DYV and GYPR. Positions 124-134 are LID; that stretch reads KRAREQGRADD. Arg125 contributes to the ATP binding site. The AMP site is built by Arg131 and Arg142. Gly170 provides a ligand contact to ATP.

Belongs to the adenylate kinase family. In terms of assembly, monomer.

Its subcellular location is the cytoplasm. It carries out the reaction AMP + ATP = 2 ADP. It functions in the pathway purine metabolism; AMP biosynthesis via salvage pathway; AMP from ADP: step 1/1. Its function is as follows. Catalyzes the reversible transfer of the terminal phosphate group between ATP and AMP. Plays an important role in cellular energy homeostasis and in adenine nucleotide metabolism. The chain is Adenylate kinase from Leifsonia xyli subsp. xyli (strain CTCB07).